The chain runs to 345 residues: Anthranilate phosphoribosyltransferase (345 aa).

5-phospho-alpha-D-ribose 1-diphosphate is bound by residues G87, 90–91, T95, 97–100, 115–123, and S127; these read GD, NAST, and KHGNRSFSS. Position 87 (G87) interacts with anthranilate. S99 contacts Mg(2+). An anthranilate-binding site is contributed by N118. Residue R173 participates in anthranilate binding. Mg(2+) contacts are provided by D232 and E233.

The protein belongs to the anthranilate phosphoribosyltransferase family. As to quaternary structure, homodimer. Mg(2+) serves as cofactor.

The catalysed reaction is N-(5-phospho-beta-D-ribosyl)anthranilate + diphosphate = 5-phospho-alpha-D-ribose 1-diphosphate + anthranilate. Its pathway is amino-acid biosynthesis; L-tryptophan biosynthesis; L-tryptophan from chorismate: step 2/5. Functionally, catalyzes the transfer of the phosphoribosyl group of 5-phosphorylribose-1-pyrophosphate (PRPP) to anthranilate to yield N-(5'-phosphoribosyl)-anthranilate (PRA). The sequence is that of Anthranilate phosphoribosyltransferase from Aeropyrum pernix (strain ATCC 700893 / DSM 11879 / JCM 9820 / NBRC 100138 / K1).